A 292-amino-acid chain; its full sequence is THO complex subunit 4B (292 aa).

A disordered region spans residues methionine 1 to phenylalanine 50. Position 2 is an N-acetylserine (serine 2). The span at arginine 23 to serine 42 shows a compositional bias: gly residues. The RRM domain maps to threonine 108–threonine 185. The segment covering glycine 241–glycine 252 has biased composition (gly residues). The segment at glycine 241–serine 292 is disordered. Residues glutamate 280–serine 292 are compositionally biased toward basic and acidic residues.

This sequence belongs to the ALYREF family. Interacts with RH15 and RH56.

It is found in the nucleus. It localises to the nucleoplasm. Export adapter involved in nuclear export of spliced and unspliced mRNA. This is THO complex subunit 4B (ALY2) from Arabidopsis thaliana (Mouse-ear cress).